The following is a 253-amino-acid chain: Triosephosphate isomerase, cytosolic (253 aa).

Residues asparagine 10 and lysine 12 each coordinate substrate. Catalysis depends on histidine 96, which acts as the Electrophile. The active-site Proton acceptor is glutamate 166.

The protein belongs to the triosephosphate isomerase family. Homodimer.

It is found in the cytoplasm. It catalyses the reaction D-glyceraldehyde 3-phosphate = dihydroxyacetone phosphate. It functions in the pathway carbohydrate biosynthesis; gluconeogenesis. It participates in carbohydrate degradation; glycolysis; D-glyceraldehyde 3-phosphate from glycerone phosphate: step 1/1. The sequence is that of Triosephosphate isomerase, cytosolic from Coptis japonica (Japanese goldthread).